The following is a 117-amino-acid chain: Large ribosomal subunit protein bL20c (117 aa).

The protein belongs to the bacterial ribosomal protein bL20 family.

The protein localises to the plastid. In terms of biological role, binds directly to 23S ribosomal RNA and is necessary for the in vitro assembly process of the 50S ribosomal subunit. It is not involved in the protein synthesizing functions of that subunit. The protein is Large ribosomal subunit protein bL20c (rpl20) of Euglena longa (Euglenophycean alga).